The sequence spans 293 residues: Probable endonuclease 4 (293 aa).

His77, His118, Glu153, Asp187, His190, His221, Asp234, His236, and Glu266 together coordinate Zn(2+).

This sequence belongs to the AP endonuclease 2 family. Zn(2+) serves as cofactor.

The enzyme catalyses Endonucleolytic cleavage to 5'-phosphooligonucleotide end-products.. In terms of biological role, endonuclease IV plays a role in DNA repair. It cleaves phosphodiester bonds at apurinic or apyrimidinic (AP) sites, generating a 3'-hydroxyl group and a 5'-terminal sugar phosphate. In Mesoplasma florum (strain ATCC 33453 / NBRC 100688 / NCTC 11704 / L1) (Acholeplasma florum), this protein is Probable endonuclease 4.